A 449-amino-acid chain; its full sequence is Neuraminidase (449 aa).

Residues 1–6 are Intravirion-facing; the sequence is MNPNQK. Residues 7–34 form a helical membrane-spanning segment; the sequence is IITIGSICMVTGIVSLMLQIGNMISIWV. The tract at residues 11–33 is involved in apical transport and lipid raft association; sequence GSICMVTGIVSLMLQIGNMISIW. Over 35-449 the chain is Virion surface; it reads SHSIHTGNQH…GAELPFTIDK (415 aa). Residues 36-70 are hypervariable stalk region; sequence HSIHTGNQHQSEPISNTNFLTEKAVASVKLAGNSS. A head of neuraminidase region spans residues 71 to 449; the sequence is LCPINGWAVY…GAELPFTIDK (379 aa). 8 disulfide bridges follow: C72–C397, C104–C109, C164–C211, C213–C218, C259–C272, C261–C270, C298–C315, and C401–C426. R98 is a substrate binding site. D131 serves as the catalytic Proton donor/acceptor. R132 is a substrate binding site. Residue 257 to 258 participates in substrate binding; it reads EE. Substrate is bound at residue R273. Residues D274, G278, D304, G322, and Y324 each coordinate Ca(2+). R348 contributes to the substrate binding site. The active-site Nucleophile is Y382.

It belongs to the glycosyl hydrolase 34 family. In terms of assembly, homotetramer. It depends on Ca(2+) as a cofactor. Post-translationally, N-glycosylated.

The protein localises to the virion membrane. It is found in the host apical cell membrane. It carries out the reaction Hydrolysis of alpha-(2-&gt;3)-, alpha-(2-&gt;6)-, alpha-(2-&gt;8)- glycosidic linkages of terminal sialic acid residues in oligosaccharides, glycoproteins, glycolipids, colominic acid and synthetic substrates.. With respect to regulation, inhibited by the neuraminidase inhibitors zanamivir (Relenza) and oseltamivir (Tamiflu). These drugs interfere with the release of progeny virus from infected cells and are effective against all influenza strains. Resistance to neuraminidase inhibitors is quite rare. Its function is as follows. Catalyzes the removal of terminal sialic acid residues from viral and cellular glycoconjugates. Cleaves off the terminal sialic acids on the glycosylated HA during virus budding to facilitate virus release. Additionally helps virus spread through the circulation by further removing sialic acids from the cell surface. These cleavages prevent self-aggregation and ensure the efficient spread of the progeny virus from cell to cell. Otherwise, infection would be limited to one round of replication. Described as a receptor-destroying enzyme because it cleaves a terminal sialic acid from the cellular receptors. May facilitate viral invasion of the upper airways by cleaving the sialic acid moities on the mucin of the airway epithelial cells. Likely to plays a role in the budding process through its association with lipid rafts during intracellular transport. May additionally display a raft-association independent effect on budding. Plays a role in the determination of host range restriction on replication and virulence. Sialidase activity in late endosome/lysosome traffic seems to enhance virus replication. The chain is Neuraminidase from Influenza A virus (strain A/Vietnam/1203/2004 H5N1).